A 191-amino-acid polypeptide reads, in one-letter code: Leucyl/phenylalanyl-tRNA--protein transferase (191 aa).

It belongs to the L/F-transferase family.

The protein resides in the cytoplasm. It carries out the reaction N-terminal L-lysyl-[protein] + L-leucyl-tRNA(Leu) = N-terminal L-leucyl-L-lysyl-[protein] + tRNA(Leu) + H(+). It catalyses the reaction N-terminal L-arginyl-[protein] + L-leucyl-tRNA(Leu) = N-terminal L-leucyl-L-arginyl-[protein] + tRNA(Leu) + H(+). The enzyme catalyses L-phenylalanyl-tRNA(Phe) + an N-terminal L-alpha-aminoacyl-[protein] = an N-terminal L-phenylalanyl-L-alpha-aminoacyl-[protein] + tRNA(Phe). Functions in the N-end rule pathway of protein degradation where it conjugates Leu, Phe and, less efficiently, Met from aminoacyl-tRNAs to the N-termini of proteins containing an N-terminal arginine or lysine. The polypeptide is Leucyl/phenylalanyl-tRNA--protein transferase (Herpetosiphon aurantiacus (strain ATCC 23779 / DSM 785 / 114-95)).